The chain runs to 309 residues: Ferrochelatase (309 aa).

Fe cation-binding residues include histidine 187 and glutamate 265.

This sequence belongs to the ferrochelatase family.

The protein localises to the cytoplasm. It carries out the reaction heme b + 2 H(+) = protoporphyrin IX + Fe(2+). It functions in the pathway porphyrin-containing compound metabolism; protoheme biosynthesis; protoheme from protoporphyrin-IX: step 1/1. Catalyzes the ferrous insertion into protoporphyrin IX. This Nitratiruptor sp. (strain SB155-2) protein is Ferrochelatase.